A 228-amino-acid chain; its full sequence is Sec-independent protein translocase protein TatB (228 aa).

A helical transmembrane segment spans residues 1–21; that stretch reads MFDFGLGELVFVGIIALIVLG. 2 disordered regions span residues 126-162 and 196-228; these read LSDG…AETD and VPHT…VRKS. Over residues 206-228 the composition is skewed to basic residues; that stretch reads AISRKRGLRPKHRAKPKLRVRKS.

This sequence belongs to the TatB family. As to quaternary structure, the Tat system comprises two distinct complexes: a TatABC complex, containing multiple copies of TatA, TatB and TatC subunits, and a separate TatA complex, containing only TatA subunits. Substrates initially bind to the TatABC complex, which probably triggers association of the separate TatA complex to form the active translocon.

The protein resides in the cell inner membrane. In terms of biological role, part of the twin-arginine translocation (Tat) system that transports large folded proteins containing a characteristic twin-arginine motif in their signal peptide across membranes. Together with TatC, TatB is part of a receptor directly interacting with Tat signal peptides. TatB may form an oligomeric binding site that transiently accommodates folded Tat precursor proteins before their translocation. The protein is Sec-independent protein translocase protein TatB of Neisseria meningitidis serogroup C / serotype 2a (strain ATCC 700532 / DSM 15464 / FAM18).